The sequence spans 223 residues: Deoxyribose-phosphate aldolase (223 aa).

Residue aspartate 91 is the Proton donor/acceptor of the active site. The active-site Schiff-base intermediate with acetaldehyde is lysine 154. The active-site Proton donor/acceptor is the lysine 183.

This sequence belongs to the DeoC/FbaB aldolase family. DeoC type 1 subfamily.

The protein resides in the cytoplasm. The catalysed reaction is 2-deoxy-D-ribose 5-phosphate = D-glyceraldehyde 3-phosphate + acetaldehyde. The protein operates within carbohydrate degradation; 2-deoxy-D-ribose 1-phosphate degradation; D-glyceraldehyde 3-phosphate and acetaldehyde from 2-deoxy-alpha-D-ribose 1-phosphate: step 2/2. Its function is as follows. Catalyzes a reversible aldol reaction between acetaldehyde and D-glyceraldehyde 3-phosphate to generate 2-deoxy-D-ribose 5-phosphate. This is Deoxyribose-phosphate aldolase from Lysinibacillus sphaericus (strain C3-41).